We begin with the raw amino-acid sequence, 168 residues long: Small ribosomal subunit protein uS5 (168 aa).

The S5 DRBM domain maps to 13 to 76 (LAEKLIAVNR…EKARRNMINV (64 aa)).

Belongs to the universal ribosomal protein uS5 family. Part of the 30S ribosomal subunit. Contacts proteins S4 and S8.

With S4 and S12 plays an important role in translational accuracy. Its function is as follows. Located at the back of the 30S subunit body where it stabilizes the conformation of the head with respect to the body. This chain is Small ribosomal subunit protein uS5, found in Pseudoalteromonas translucida (strain TAC 125).